A 412-amino-acid chain; its full sequence is Tyrosine--tRNA ligase (412 aa).

The short motif at 50 to 59 is the 'HIGH' region element; it reads PTGTDIHLGH. Residues 244–248 carry the 'KMSKS' region motif; it reads KMSKS. Lys-247 contributes to the ATP binding site. An S4 RNA-binding domain is found at 348-411; the sequence is VKFFYLLSSL…IGKKIIKRFE (64 aa).

Belongs to the class-I aminoacyl-tRNA synthetase family. TyrS type 2 subfamily. In terms of assembly, homodimer.

It localises to the cytoplasm. It carries out the reaction tRNA(Tyr) + L-tyrosine + ATP = L-tyrosyl-tRNA(Tyr) + AMP + diphosphate + H(+). Functionally, catalyzes the attachment of tyrosine to tRNA(Tyr) in a two-step reaction: tyrosine is first activated by ATP to form Tyr-AMP and then transferred to the acceptor end of tRNA(Tyr). This chain is Tyrosine--tRNA ligase, found in Prochlorococcus marinus (strain MIT 9312).